A 482-amino-acid chain; its full sequence is G-protein coupled receptor 37-like 1 (482 aa).

Positions 1–25 (MRWLWPLGVSLAVALAAGPERAPRG) are cleaved as a signal peptide. 2 disordered regions span residues 25–56 (GVWLQQGGHQPVAQEQPDRSRRGAEREDAKGL) and 78–119 (PTQP…VQNP). At 26-134 (VWLQQGGHQP…ERSYGAYAVL (109 aa)) the chain is on the extracellular side. Residues 40 to 54 (QPDRSRRGAEREDAK) are compositionally biased toward basic and acidic residues. Residue asparagine 105 is glycosylated (N-linked (GlcNAc...) asparagine). Residues 135–155 (LLALLLFAVGIVGSLAVMCIV) traverse the membrane as a helical segment. Over 156–167 (WHSYYLKSAWNS) the chain is Cytoplasmic. The helical transmembrane segment at 168–188 (VLASLALWDFLVLFFCLPVVT) threads the bilayer. Topologically, residues 189–205 (FHEITKQRLLGAVSCRA) are extracellular. Cysteine 203 and cysteine 286 are oxidised to a cystine. Residues 206-226 (VPFVEVSSLGVTTFSLCALGI) form a helical membrane-spanning segment. Topologically, residues 227–251 (DRFHVATSTLPKARPIEPCPSILAK) are cytoplasmic. Residues 252–272 (LAVIWVGSMTLAAPELLLWQL) form a helical membrane-spanning segment. The Extracellular portion of the chain corresponds to 273–310 (VREPSPAAGTVDTCIMKPSAHLPESLYSLVLTYQNARM). The chain crosses the membrane as a helical span at residues 311–331 (WWSFGCYFCLPVLFTVTCQLV). Topologically, residues 332–361 (TWRVRGTPGRKPESRPGPQEPRGARPSSTV) are cytoplasmic. Residues 338–358 (TPGRKPESRPGPQEPRGARPS) are disordered. A helical membrane pass occupies residues 362-382 (AGLAAVHALCALPENVCNVVA). The Extracellular segment spans residues 383 to 398 (AYLSAALTRQTLELLG). The chain crosses the membrane as a helical span at residues 399-419 (LVTQFSTFFKAALTPLLLLCV). Residues 420–482 (SRPLGRAFLD…PPLLALGTPC (63 aa)) lie on the Cytoplasmic side of the membrane. Threonine 480 is modified (phosphothreonine).

Belongs to the G-protein coupled receptor 1 family. As to quaternary structure, interacts with the PTCH1 receptor. Post-translationally, undergoes metalloprotease-mediated cleavage which reduces its constitutive activity. In terms of processing, ubiquitinated.

It is found in the cell membrane. It localises to the cell projection. The protein resides in the cilium membrane. Functionally, G-protein coupled receptor. Has been shown to bind the neuroprotective and glioprotective factor prosaposin (PSAP), leading to endocytosis followed by an ERK phosphorylation cascade. However, other studies have shown that prosaposin does not increase activity. It has been suggested that GPR37L1 is a constitutively active receptor which signals through the guanine nucleotide-binding protein G(s) subunit alpha. Participates in the regulation of postnatal cerebellar development by modulating the Shh pathway. Regulates baseline blood pressure in females and protects against cardiovascular stress in males. Mediates inhibition of astrocyte glutamate transporters and reduction in neuronal N-methyl-D-aspartate receptor activity. The polypeptide is G-protein coupled receptor 37-like 1 (GPR37L1) (Bos taurus (Bovine)).